Consider the following 300-residue polypeptide: Actin-related protein 2/3 complex subunit 2-B (300 aa).

It belongs to the ARPC2 family. Component of the Arp2/3 complex composed of actr2/arp2, actr3/arp3, arpc1 (arpc1a or arpc1b), arpc2, arpc3, arpc4 and arpc5.

The protein resides in the cytoplasm. It localises to the cytoskeleton. Its subcellular location is the cell projection. The protein localises to the nucleus. Its function is as follows. Actin-binding component of the Arp2/3 complex, a multiprotein complex that mediates actin polymerization upon stimulation by nucleation-promoting factor (NPF). The Arp2/3 complex mediates the formation of branched actin networks in the cytoplasm, providing the force for cell motility. In addition to its role in the cytoplasmic cytoskeleton, the Arp2/3 complex also promotes actin polymerization in the nucleus, thereby regulating gene transcription and repair of damaged DNA. The Arp2/3 complex promotes homologous recombination (HR) repair in response to DNA damage by promoting nuclear actin polymerization, leading to drive motility of double-strand breaks (DSBs). The protein is Actin-related protein 2/3 complex subunit 2-B (arpc2-b) of Xenopus laevis (African clawed frog).